The chain runs to 191 residues: MRNVWLIVPFALLAALSGETWAQADRDLYIDSTESSGNYPVDDDDYSSGSGSGIPARGDDEDENVVLTTVQTLISSPSSEMPYVETTTLKTQTKMAPETKEPGEVESTNTVLVYGKKDIVQTATHTENLFHRTEVLAAVIAGGGIGFLFAVFLILLLVYRMRKKDEGSYDLGERKPSSAVYQKAPTKEFYA.

The first 22 residues, 1 to 22, serve as a signal peptide directing secretion; sequence MRNVWLIVPFALLAALSGETWA. The Extracellular portion of the chain corresponds to 23–137; the sequence is QADRDLYIDS…NLFHRTEVLA (115 aa). A disordered region spans residues 32–60; sequence STESSGNYPVDDDDYSSGSGSGIPARGDD. O-linked (Xyl...) (glycosaminoglycan) serine glycans are attached at residues Ser36, Ser48, Ser50, and Ser52. Residues 138-158 form a helical membrane-spanning segment; sequence AVIAGGGIGFLFAVFLILLLV. The Cytoplasmic portion of the chain corresponds to 159-191; sequence YRMRKKDEGSYDLGERKPSSAVYQKAPTKEFYA. The interval 168–191 is disordered; that stretch reads SYDLGERKPSSAVYQKAPTKEFYA.

This sequence belongs to the syndecan proteoglycan family. O-glycosylated; contains both heparan sulfate and chondroitin sulfate.

The protein localises to the membrane. Functionally, cell surface proteoglycan. This is Syndecan-2-A (sdc2-a) from Xenopus laevis (African clawed frog).